The sequence spans 533 residues: Probable ADP-ribosylation factor-binding protein C25H2.16c (533 aa).

A VHS domain is found at 15–151 (ATEPYAFEPD…LLSYKGYTFP (137 aa)). Residues 178–305 (REAMSAKLQE…LLTQYDHLLE (128 aa)) enclose the GAT domain. Serine 320 is subject to Phosphoserine. The region spanning 417 to 532 (NNFTSTCAFE…EYTGQSSIRL (116 aa)) is the GAE domain.

This sequence belongs to the GGA protein family.

The protein localises to the golgi apparatus. The protein resides in the trans-Golgi network. Its function is as follows. May play a role in the regulation of membrane traffic through the trans-Golgi network. The chain is Probable ADP-ribosylation factor-binding protein C25H2.16c from Schizosaccharomyces pombe (strain 972 / ATCC 24843) (Fission yeast).